A 416-amino-acid chain; its full sequence is Lysosome-associated membrane glycoprotein 3 (416 aa).

An N-terminal signal peptide occupies residues 1-27; sequence MPRQLSAAAVLFASLAVILHDGSQMRA. Topologically, residues 28–381 are lumenal; that stretch reads KAFPKTRDYS…NVDECSSDYT (354 aa). Residues 135–217 are disordered; that stretch reads PPTITPPAHT…ASTVPGSTLA (83 aa). Polar residues predominate over residues 142 to 170; that stretch reads AHTTGTSSSTVNHTTGNATQPSNQTTLPA. Low complexity predominate over residues 188 to 208; that stretch reads PTHAPGTTAAAHNTTRTAAPA. N-linked (GlcNAc...) asparagine glycosylation is present at asparagine 200. Cysteine 237 and cysteine 274 are disulfide-bonded. Residue asparagine 291 is glycosylated (N-linked (GlcNAc...) asparagine). Residues cysteine 339 and cysteine 376 are joined by a disulfide bond. Residues 382–402 traverse the membrane as a helical segment; sequence IVLPVIGAIVVGLCLVGMGVY. The Cytoplasmic segment spans residues 403–416; sequence KIRLRCQSSGYQRI.

The protein belongs to the LAMP family. In terms of assembly, monomer. Interacts with FURIN.

The protein resides in the cell surface. Its subcellular location is the lysosome membrane. It is found in the cytoplasmic vesicle membrane. The protein localises to the early endosome membrane. In terms of biological role, lysosomal membrane glycoprotein which plays a role in the unfolded protein response (UPR) that contributes to protein degradation and cell survival during proteasomal dysfunction. Plays a role in the process of fusion of the lysosome with the autophagosome, thereby modulating the autophagic process. Promotes hepatocellular lipogenesis through activation of the PI3K/Akt pathway. May also play a role in dendritic cell function and in adaptive immunity. The protein is Lysosome-associated membrane glycoprotein 3 (LAMP3) of Macaca mulatta (Rhesus macaque).